The primary structure comprises 212 residues: 2-hydroxychromene-2-carboxylate isomerase (212 aa).

Serine 24 functions as the Nucleophile in the catalytic mechanism. Serine 24 lines the glutathione pocket. Substrate contacts are provided by residues lysine 56, 66–67, and tyrosine 97; that span reads NR. Glutathione is bound by residues valine 181 and 192–195; that span reads WGND.

Belongs to the GST superfamily. NadH family. Glutathione serves as cofactor.

The catalysed reaction is 2-hydroxychromene-2-carboxylate = (3E)-4-(2-hydroxyphenyl)-2-oxobut-3-enoate. It functions in the pathway aromatic compound metabolism; naphthalene degradation. Involved in the naphthalene catabolic pathway. Catalyzes the reversible glutathione-dependent isomerization of 2-hydroxychromene-2-carboxylate (HCCA) to trans-O-hydroxybenzylidenepyruvate (THBPA). The chain is 2-hydroxychromene-2-carboxylate isomerase (doxJ) from Pseudomonas sp. (strain C18).